The sequence spans 616 residues: Membrane protein insertase YidC (616 aa).

The chain crosses the membrane as a helical span at residues 9-29 (ILAVILSGLVLIAWQYFYNVP). The tract at residues 37–80 (QQQAQAELQKTTPQPTASATPGATPQSGGAAQPSTPAAGQQAQP) is disordered. A compositionally biased stretch (polar residues) spans 44–71 (LQKTTPQPTASATPGATPQSGGAAQPST). 4 helical membrane passes run 388 to 408 (FFGN…LLFF), 462 to 482 (LPVV…FVTI), 520 to 540 (VFGH…TMWF), and 559 to 579 (WMPL…VIYW).

Belongs to the OXA1/ALB3/YidC family. Type 1 subfamily. Interacts with the Sec translocase complex via SecD. Specifically interacts with transmembrane segments of nascent integral membrane proteins during membrane integration.

Its subcellular location is the cell inner membrane. Functionally, required for the insertion and/or proper folding and/or complex formation of integral membrane proteins into the membrane. Involved in integration of membrane proteins that insert both dependently and independently of the Sec translocase complex, as well as at least some lipoproteins. Aids folding of multispanning membrane proteins. In Bradyrhizobium diazoefficiens (strain JCM 10833 / BCRC 13528 / IAM 13628 / NBRC 14792 / USDA 110), this protein is Membrane protein insertase YidC.